A 259-amino-acid chain; its full sequence is Phosphate import ATP-binding protein PstB (259 aa).

Residues 6-254 (SKNESVVFDV…PKDKRTEDYI (249 aa)) form the ABC transporter domain. 45–52 (GPSGCGKS) is an ATP binding site.

It belongs to the ABC transporter superfamily. Phosphate importer (TC 3.A.1.7) family. As to quaternary structure, the complex is composed of two ATP-binding proteins (PstB), two transmembrane proteins (PstC and PstA) and a solute-binding protein (PstS).

Its subcellular location is the cell membrane. The catalysed reaction is phosphate(out) + ATP + H2O = ADP + 2 phosphate(in) + H(+). Part of the ABC transporter complex PstSACB involved in phosphate import. Responsible for energy coupling to the transport system. The polypeptide is Phosphate import ATP-binding protein PstB (Desulfitobacterium hafniense (strain Y51)).